The primary structure comprises 372 residues: Ketol-acid reductoisomerase (NADP(+)) (372 aa).

A disordered region spans residues 1–25 (MTETKTQTETETDEEEGTDTDTALD). The segment covering 10–19 (TETDEEEGTD) has biased composition (acidic residues). Residues 24-205 (LDTTIYYDDD…GCTRAGAIET (182 aa)) enclose the KARI N-terminal Rossmann domain. NADP(+)-binding positions include 49 to 52 (YGSQ), Ser-75, Ser-77, and 107 to 110 (DTVQ). His-131 is a catalytic residue. Gly-157 serves as a coordination point for NADP(+). In terms of domain architecture, KARI C-terminal knotted spans 206-351 (TFREETETDL…EPLRDLFAWS (146 aa)). Residues Asp-214, Glu-218, Glu-250, and Glu-254 each coordinate Mg(2+). Ser-275 contacts substrate. Residues 351–372 (SDNEETNDESDVVSEPEAAADD) form a disordered region. A compositionally biased stretch (acidic residues) spans 352–372 (DNEETNDESDVVSEPEAAADD).

It belongs to the ketol-acid reductoisomerase family. Mg(2+) serves as cofactor.

It carries out the reaction (2R)-2,3-dihydroxy-3-methylbutanoate + NADP(+) = (2S)-2-acetolactate + NADPH + H(+). The enzyme catalyses (2R,3R)-2,3-dihydroxy-3-methylpentanoate + NADP(+) = (S)-2-ethyl-2-hydroxy-3-oxobutanoate + NADPH + H(+). The protein operates within amino-acid biosynthesis; L-isoleucine biosynthesis; L-isoleucine from 2-oxobutanoate: step 2/4. Its pathway is amino-acid biosynthesis; L-valine biosynthesis; L-valine from pyruvate: step 2/4. Involved in the biosynthesis of branched-chain amino acids (BCAA). Catalyzes an alkyl-migration followed by a ketol-acid reduction of (S)-2-acetolactate (S2AL) to yield (R)-2,3-dihydroxy-isovalerate. In the isomerase reaction, S2AL is rearranged via a Mg-dependent methyl migration to produce 3-hydroxy-3-methyl-2-ketobutyrate (HMKB). In the reductase reaction, this 2-ketoacid undergoes a metal-dependent reduction by NADPH to yield (R)-2,3-dihydroxy-isovalerate. This is Ketol-acid reductoisomerase (NADP(+)) from Haloquadratum walsbyi (strain DSM 16790 / HBSQ001).